Here is a 396-residue protein sequence, read N- to C-terminus: 1-deoxy-D-xylulose 5-phosphate reductoisomerase (396 aa).

NADPH is bound by residues threonine 10, glycine 11, serine 12, isoleucine 13, and asparagine 123. Residue lysine 124 participates in 1-deoxy-D-xylulose 5-phosphate binding. Glutamate 125 is an NADPH binding site. Aspartate 149 is a binding site for Mn(2+). The 1-deoxy-D-xylulose 5-phosphate site is built by serine 150, glutamate 151, serine 185, and histidine 208. Glutamate 151 is a Mn(2+) binding site. Glycine 214 contacts NADPH. 1-deoxy-D-xylulose 5-phosphate-binding residues include serine 221, asparagine 226, lysine 227, and glutamate 230. Mn(2+) is bound at residue glutamate 230.

This sequence belongs to the DXR family. It depends on Mg(2+) as a cofactor. Mn(2+) is required as a cofactor.

The enzyme catalyses 2-C-methyl-D-erythritol 4-phosphate + NADP(+) = 1-deoxy-D-xylulose 5-phosphate + NADPH + H(+). Its pathway is isoprenoid biosynthesis; isopentenyl diphosphate biosynthesis via DXP pathway; isopentenyl diphosphate from 1-deoxy-D-xylulose 5-phosphate: step 1/6. Functionally, catalyzes the NADPH-dependent rearrangement and reduction of 1-deoxy-D-xylulose-5-phosphate (DXP) to 2-C-methyl-D-erythritol 4-phosphate (MEP). This Shewanella baltica (strain OS223) protein is 1-deoxy-D-xylulose 5-phosphate reductoisomerase.